The primary structure comprises 360 residues: Pyrimidine monooxygenase RutA (360 aa).

Residues 49 to 50, Asn-115, Glu-124, 140 to 141, and Ser-190 each bind FMN; these read IK and RY.

Belongs to the NtaA/SnaA/DszA monooxygenase family. RutA subfamily.

The enzyme catalyses uracil + FMNH2 + NADH + O2 = (Z)-3-ureidoacrylate + FMN + NAD(+) + H2O + H(+). It catalyses the reaction thymine + FMNH2 + NADH + O2 = (Z)-2-methylureidoacrylate + FMN + NAD(+) + H2O + H(+). Catalyzes the pyrimidine ring opening between N-3 and C-4 by an unusual flavin hydroperoxide-catalyzed mechanism, adding oxygen atoms in the process to yield ureidoacrylate peracid, that immediately reacts with FMN forming ureidoacrylate and FMN-N(5)-oxide. The FMN-N(5)-oxide reacts spontaneously with NADH to produce FMN. Requires the flavin reductase RutF to regenerate FMN in vivo. The sequence is that of Pyrimidine monooxygenase RutA from Bradyrhizobium sp. (strain BTAi1 / ATCC BAA-1182).